The following is a 496-amino-acid chain: ATP synthase subunit beta 1 (496 aa).

Residue 167-174 participates in ATP binding; the sequence is GGAGVGKT. The interval 474–496 is disordered; the sequence is REAAAAQQSTAQQAAPAEKEPAA. The span at 476–489 shows a compositional bias: low complexity; that stretch reads AAAAQQSTAQQAAP.

The protein belongs to the ATPase alpha/beta chains family. In terms of assembly, F-type ATPases have 2 components, CF(1) - the catalytic core - and CF(0) - the membrane proton channel. CF(1) has five subunits: alpha(3), beta(3), gamma(1), delta(1), epsilon(1). CF(0) has three main subunits: a(1), b(2) and c(9-12). The alpha and beta chains form an alternating ring which encloses part of the gamma chain. CF(1) is attached to CF(0) by a central stalk formed by the gamma and epsilon chains, while a peripheral stalk is formed by the delta and b chains.

The protein localises to the cell inner membrane. The catalysed reaction is ATP + H2O + 4 H(+)(in) = ADP + phosphate + 5 H(+)(out). Its function is as follows. Produces ATP from ADP in the presence of a proton gradient across the membrane. The catalytic sites are hosted primarily by the beta subunits. The chain is ATP synthase subunit beta 1 from Paraburkholderia xenovorans (strain LB400).